The sequence spans 537 residues: MGCIKSKEDKGPSIKYRTEPKPDPGSQYGADPTQATQSPGIKGPAPNFNSHSMTPFGGSSGITPFGGASSIFSPTPVPYPGGLTGGVTVFVALYDYEARTTEDLSFRKGERFQIINNTEGDWWEARSIATGKTGYIPSNYVAPADSIQAEEWYFGKMGRKDAERLLLNPGNQRGTFLVRESETTKGAYSLSIRDWDEVRGDNVKHYKIRKLDNGGYYITTRAQFESLQKLVKHYSEHADGLCYRLTTVCPSVKPQTQGLAKDAWEIPRESLRLDVKLGQGCFGEVWIGTWNGTTKVAIKTLKPGTMMPEAFLQEAQIMKKLRHDKLVPLYAVVSEEPIYIVTEYMIKGSLLDFLKEGNGKYLKLPQLVDMAAQIADGMAYIERMNYIHRDLRAANILVGDNLVCKIADFGLARLIEDNEYTARQGAKFPIKWTAPEAALYGRFTIKSDVWSFGILLTELVAKGRVPYPGMVNREVLEQVERGYRMPCPQRCPESLHELMKLCWKKDPDERPTFEYIQSFLEDYFTATEPQYQPGDNL.

Over residues 1-22 (MGCIKSKEDKGPSIKYRTEPKP) the composition is skewed to basic and acidic residues. Residues 1–60 (MGCIKSKEDKGPSIKYRTEPKPDPGSQYGADPTQATQSPGIKGPAPNFNSHSMTPFGGSS) form a disordered region. The N-myristoyl glycine moiety is linked to residue Gly2. Cys3 carries the S-palmitoyl cysteine; in membrane form lipid modification. The SH3 domain occupies 85 to 146 (GGVTVFVALY…PSNYVAPADS (62 aa)). Residues 152–249 (WYFGKMGRKD…GLCYRLTTVC (98 aa)) enclose the SH2 domain. Positions 271–524 (LRLDVKLGQG…YIQSFLEDYF (254 aa)) constitute a Protein kinase domain. ATP is bound by residues 277–285 (LGQGCFGEV) and Lys299. Asp390 acts as the Proton acceptor in catalysis. Residue Tyr420 is modified to Phosphotyrosine; by autocatalysis. The residue at position 531 (Tyr531) is a Phosphotyrosine; by CSK.

Belongs to the protein kinase superfamily. Tyr protein kinase family. SRC subfamily. Post-translationally, autophosphorylated at Tyr-420 inducing activation. In terms of processing, palmitoylation at Cys-3 promotes membrane localization.

The protein resides in the cell membrane. It localises to the cytoplasm. Its subcellular location is the cytoskeleton. The protein localises to the microtubule organizing center. It is found in the centrosome. The protein resides in the cytosol. It localises to the cell junction. It carries out the reaction L-tyrosyl-[protein] + ATP = O-phospho-L-tyrosyl-[protein] + ADP + H(+). Non-receptor protein tyrosine kinase that is involved in the regulation of cell growth and survival, apoptosis, cell-cell adhesion, cytoskeleton remodeling, differentiation, G2/M progression and cytokinesis. The chain is Tyrosine-protein kinase Yes (yes1) from Xenopus laevis (African clawed frog).